Here is a 133-residue protein sequence, read N- to C-terminus: Small ribosomal subunit protein uS8 (133 aa).

It belongs to the universal ribosomal protein uS8 family. Part of the 30S ribosomal subunit. Contacts proteins S5 and S12.

One of the primary rRNA binding proteins, it binds directly to 16S rRNA central domain where it helps coordinate assembly of the platform of the 30S subunit. The sequence is that of Small ribosomal subunit protein uS8 from Orientia tsutsugamushi (strain Boryong) (Rickettsia tsutsugamushi).